Consider the following 312-residue polypeptide: D-alanine--D-alanine ligase (312 aa).

The 201-residue stretch at 108–308 (KLVWQQTGIP…YSELVVKVLS (201 aa)) folds into the ATP-grasp domain. Residue 138 to 193 (VAKLGMPLFVKPASEGSSVAVEKVKSADALPAALEEAAKHDKIVIVEKSIEGGGEY) coordinates ATP. 3 residues coordinate Mg(2+): D262, E275, and N277.

The protein belongs to the D-alanine--D-alanine ligase family. The cofactor is Mg(2+). It depends on Mn(2+) as a cofactor.

It localises to the cytoplasm. The enzyme catalyses 2 D-alanine + ATP = D-alanyl-D-alanine + ADP + phosphate + H(+). It functions in the pathway cell wall biogenesis; peptidoglycan biosynthesis. Functionally, cell wall formation. The polypeptide is D-alanine--D-alanine ligase (Burkholderia thailandensis (strain ATCC 700388 / DSM 13276 / CCUG 48851 / CIP 106301 / E264)).